Consider the following 363-residue polypeptide: Trans-2,3-enoyl-CoA reductase-like (363 aa).

Phosphoserine is present on serine 37. Helical transmembrane passes span tryptophan 143–leucine 163, leucine 217–histidine 237, and isoleucine 311–isoleucine 331.

Belongs to the steroid 5-alpha reductase family. As to expression, predominantly expressed in the heart and skeletal muscle.

Its subcellular location is the membrane. The protein resides in the endoplasmic reticulum. The protein is Trans-2,3-enoyl-CoA reductase-like (TECRL) of Homo sapiens (Human).